Here is a 124-residue protein sequence, read N- to C-terminus: uncharacterized protein (124 aa).

The signal sequence occupies residues 1-23 (MHKLLKLLSITLIGLSVATGVQA).

The protein belongs to the cytochrome b562 family.

This is an uncharacterized protein from Pasteurella multocida (strain Pm70).